We begin with the raw amino-acid sequence, 231 residues long: Flagellar L-ring protein (231 aa).

The signal sequence occupies residues 1 to 18 (MNRLMIVSLLGIATVLGG). Cys19 is lipidated: N-palmitoyl cysteine. Residue Cys19 is the site of S-diacylglycerol cysteine attachment. Positions 118–141 (LSLSAEYGGSRDAKGDSQAGQSNS) are disordered.

It belongs to the FlgH family. As to quaternary structure, the basal body constitutes a major portion of the flagellar organelle and consists of four rings (L,P,S, and M) mounted on a central rod.

The protein resides in the cell outer membrane. It localises to the bacterial flagellum basal body. Functionally, assembles around the rod to form the L-ring and probably protects the motor/basal body from shearing forces during rotation. In Pseudomonas paraeruginosa (strain DSM 24068 / PA7) (Pseudomonas aeruginosa (strain PA7)), this protein is Flagellar L-ring protein.